Reading from the N-terminus, the 953-residue chain is Lysosomal alpha-glucosidase (953 aa).

Positions 1-27 (MNIRKPLCSNSVVGACTLISLTTAVIL) are cleaved as a signal peptide. Positions 28–69 (GHLMLRELMLLPQDLHESSSGLWKTYRPHHQEGYKPGPLHIQ) are excised as a propeptide. Residues 80–131 (TQCDVPPSSRFDCAPDKGISQEQCEARGCCYVPAGQVLKEPQIGQPWCFFPP) form the P-type domain. 3 cysteine pairs are disulfide-bonded: Cys-82/Cys-109, Cys-92/Cys-108, and Cys-103/Cys-127. N-linked (GlcNAc...) asparagine glycosylation is found at Asn-140, Asn-233, and Asn-390. Asp-404 is a binding site for substrate. The N-linked (GlcNAc...) asparagine glycan is linked to Asn-470. The Nucleophile role is filled by Asp-518. Residue Glu-521 is part of the active site. Cys-533 and Cys-558 are disulfide-bonded. Substrate is bound by residues Arg-600 and Asp-616. Cysteines 647 and 658 form a disulfide. His-674 is a binding site for substrate. 3 N-linked (GlcNAc...) asparagine glycosylation sites follow: Asn-883, Asn-926, and Asn-933.

This sequence belongs to the glycosyl hydrolase 31 family.

It localises to the lysosome. It is found in the lysosome membrane. It catalyses the reaction Hydrolysis of terminal, non-reducing (1-&gt;4)-linked alpha-D-glucose residues with release of alpha-D-glucose.. In terms of biological role, essential for the degradation of glycogen in lysosomes. Has highest activity on alpha-1,4-linked glycosidic linkages, but can also hydrolyze alpha-1,6-linked glucans. The sequence is that of Lysosomal alpha-glucosidase (Gaa) from Mus musculus (Mouse).